A 134-amino-acid chain; its full sequence is Cytochrome b (134 aa).

3 helical membrane passes run 33 to 53 (FGSL…FLAM), 77 to 98 (WLLR…YLHV), and 113 to 133 (WNVG…GYVL). Residues H83 and H97 each contribute to the heme b site.

Belongs to the cytochrome b family. In terms of assembly, the cytochrome bc1 complex contains 11 subunits: 3 respiratory subunits (MT-CYB, CYC1 and UQCRFS1), 2 core proteins (UQCRC1 and UQCRC2) and 6 low-molecular weight proteins (UQCRH/QCR6, UQCRB/QCR7, UQCRQ/QCR8, UQCR10/QCR9, UQCR11/QCR10 and a cleavage product of UQCRFS1). This cytochrome bc1 complex then forms a dimer. Requires heme b as cofactor.

The protein localises to the mitochondrion inner membrane. Component of the ubiquinol-cytochrome c reductase complex (complex III or cytochrome b-c1 complex) that is part of the mitochondrial respiratory chain. The b-c1 complex mediates electron transfer from ubiquinol to cytochrome c. Contributes to the generation of a proton gradient across the mitochondrial membrane that is then used for ATP synthesis. The sequence is that of Cytochrome b (MT-CYB) from Chiroderma trinitatum (Little big-eyed bat).